We begin with the raw amino-acid sequence, 316 residues long: Apolipoprotein E (316 aa).

A signal peptide spans 1-18 (MKVLWVAVVVALLAGCQA). The O-linked (GalNAc...) threonine glycan is linked to Thr32. A run of 8 repeats spans residues 79–100 (ALME…GQLG), 101–122 (PMAQ…ARLG), 123–144 (SDME…AMLG), 145–166 (QSTE…KRLL), 167–188 (RDAD…EGAE), 189–210 (RSLS…SRAA), 211–232 (TLST…QKLH), and 233–254 (GRLE…QQLE). The tract at residues 79–254 (ALMEETMKEV…RLDKIRQQLE (176 aa)) is 8 X 22 AA approximate tandem repeats. The residue at position 142 (Met142) is a Methionine sulfoxide. At Ser146 the chain carries Phosphoserine. Residues 157–167 (HLRKLPKRLLR) are LDL and other lipoprotein receptors binding. Heparin is bound at residue 161–164 (LPKR). A lipid-binding and lipoprotein association region spans residues 209–289 (AATLSTLAGQ…SWFEPLVEDM (81 aa)). O-linked (GalNAc...) threonine glycosylation is present at Thr211. Position 228-235 (228-235 (RQKLHGRL)) interacts with heparin. Residues 265–316 (NQMRLQAEAFQARLRSWFEPLVEDMQRQWAGLVEKVQLALRPSPTSPPSENH) form a homooligomerization region. The segment at 277–289 (RLRSWFEPLVEDM) is specificity for association with VLDL. An O-linked (GalNAc...) threonine glycan is attached at Thr309. Ser310 carries O-linked (GalNAc...) serine glycosylation.

It belongs to the apolipoprotein A1/A4/E family. Homotetramer. May interact with ABCA1; functionally associated with ABCA1 in the biogenesis of HDLs. May interact with APP/A4 amyloid-beta peptide; the interaction is extremely stable in vitro but its physiological significance is unclear. May interact with MAPT. May interact with MAP2. In the cerebrospinal fluid, interacts with secreted SORL1. Interacts with PMEL; this allows the loading of PMEL luminal fragment on ILVs to induce fibril nucleation. In terms of processing, APOE exists as multiple glycosylated and sialylated glycoforms within cells and in plasma. The extent of glycosylation and sialylation are tissue and context specific. Post-translationally, glycated in plasma VLDL. Phosphorylated by FAM20C in the extracellular medium.

Its subcellular location is the secreted. The protein resides in the extracellular space. The protein localises to the extracellular matrix. It localises to the extracellular vesicle. It is found in the endosome. Its subcellular location is the multivesicular body. Functionally, APOE is an apolipoprotein, a protein associating with lipid particles, that mainly functions in lipoprotein-mediated lipid transport between organs via the plasma and interstitial fluids. APOE is a core component of plasma lipoproteins and is involved in their production, conversion and clearance. Apolipoproteins are amphipathic molecules that interact both with lipids of the lipoprotein particle core and the aqueous environment of the plasma. As such, APOE associates with chylomicrons, chylomicron remnants, very low density lipoproteins (VLDL) and intermediate density lipoproteins (IDL) but shows a preferential binding to high-density lipoproteins (HDL). It also binds a wide range of cellular receptors including the LDL receptor/LDLR and the very low-density lipoprotein receptor/VLDLR that mediate the cellular uptake of the APOE-containing lipoprotein particles. Finally, APOE also has a heparin-binding activity and binds heparan-sulfate proteoglycans on the surface of cells, a property that supports the capture and the receptor-mediated uptake of APOE-containing lipoproteins by cells. The chain is Apolipoprotein E (APOE) from Bos taurus (Bovine).